A 542-amino-acid chain; its full sequence is Exopolysaccharide phosphotransferase CpsY (542 aa).

The tract at residues 522-542 (SPTVSAPLEDGQTANPAQTAR) is disordered. A compositionally biased stretch (polar residues) spans 533-542 (QTANPAQTAR).

Belongs to the stealth family.

In Mycobacterium leprae (strain TN), this protein is Exopolysaccharide phosphotransferase CpsY (cpsY).